The sequence spans 156 residues: Large ribosomal subunit protein eL24 (156 aa).

Residues 87–156 form a disordered region; sequence LELIKERRSQ…AFQKVHATSR (70 aa). Basic and acidic residues predominate over residues 89–129; the sequence is LIKERRSQKPSDRKAARDVKLAKDKEAKKADKAARKAEKAK. Over residues 130-147 the composition is skewed to low complexity; it reads SAAAGAQSKVSKQQSKGA.

It belongs to the eukaryotic ribosomal protein eL24 family.

In Debaryomyces hansenii (strain ATCC 36239 / CBS 767 / BCRC 21394 / JCM 1990 / NBRC 0083 / IGC 2968) (Yeast), this protein is Large ribosomal subunit protein eL24 (RPL24).